Consider the following 356-residue polypeptide: MSRILLLLAVLIGATSQKEVTIKNEKCRTCNFLVSTFDEGLKKTARHHFAGGDTAWEEKNLGKYKTSETRLIEVLEGVCKKSSLPNMDNFMGIAEIEFKCSTQLEKHEETIEEFYYNQQHNNMSNWLCVEQLKLCCPDGHFGKNCEQCPGLSEKADVCFGKGSCHGDGSREGSGKCKCETGYTGNLCRYCDIEYFEESRTVQGVVCKKCHEGCLGVCSSESSKGCSKCKNGWKLTEEGCADVNECQNESACTKEHEICVNTVGSFKCECKEGYKKDDEQNCQFDVEASPDRPFMPIDQQLKLIAFSSLIIIITFVVWHGSPVLYVLTGITIVALILVDLYVNPDTIPDEAKRFLGY.

The first 17 residues, 1-17, serve as a signal peptide directing secretion; it reads MSRILLLLAVLIGATSQ. The Lumenal segment spans residues 18–299; that stretch reads KEVTIKNEKC…DRPFMPIDQQ (282 aa). Positions 27-30 match the CXXC motif; it reads CRTC. Cys27 and Cys30 are joined by a disulfide. Residue Asn122 is glycosylated (N-linked (GlcNAc...) asparagine). The EGF-like 1 domain occupies 150-188; it reads GLSEKADVCFGKGSCHGDGSREGSGKCKCETGYTGNLCR. Cystine bridges form between Cys158-Cys176, Cys178-Cys187, Cys245-Cys258, Cys251-Cys267, and Cys269-Cys281. The 42-residue stretch at 241–282 folds into the EGF-like 2; calcium-binding domain; that stretch reads DVNECQNESACTKEHEICVNTVGSFKCECKEGYKKDDEQNCQ. An N-linked (GlcNAc...) asparagine glycan is attached at Asn247. Residues 300-317 form a helical membrane-spanning segment; the sequence is LKLIAFSSLIIIITFVVW. Residues 318 to 321 lie on the Cytoplasmic side of the membrane; it reads HGSP. Residues 322–341 traverse the membrane as a helical segment; it reads VLYVLTGITIVALILVDLYV. At 342–356 the chain is on the lumenal side; that stretch reads NPDTIPDEAKRFLGY.

Belongs to the CRELD family. In terms of assembly, interacts with unc-29. Isoforms a: Widely expressed in tissues including body wall muscles, neurons, pharynx, hypodermis, seam cells, intestine and gonad. Isoform b: Widely expressed in tissues including body wall muscles, neurons, pharynx, hypodermis, seam cells, intestine and gonad.

The protein localises to the endoplasmic reticulum membrane. It is found in the endoplasmic reticulum lumen. It catalyses the reaction Catalyzes the rearrangement of -S-S- bonds in proteins.. Protein disulfide isomerase which associates with the unc-29 subunit of levamisole-sensitive nicotinic acetylcholine receptors (L-nAChR) to promote L-nAChR assembly in the endoplasmic reticulum at neuromuscular junctions. Its function is as follows. Promotes L-nAChR assembly in the endoplasmic reticulum at neuromuscular junctions. This Caenorhabditis elegans protein is Protein disulfide isomerase crld-1.